The sequence spans 62 residues: MDEKLSRVDPKLLDLLVCPLSKGRLSYDREHNELVSEKARLAYPIRDGIPIMLMSEARRLDD.

Belongs to the UPF0434 family.

In Rhizobium johnstonii (strain DSM 114642 / LMG 32736 / 3841) (Rhizobium leguminosarum bv. viciae), this protein is UPF0434 protein RL4569.